A 70-amino-acid polypeptide reads, in one-letter code: Enhancer of split m6 protein (70 aa).

This chain is Enhancer of split m6 protein, found in Drosophila melanogaster (Fruit fly).